The primary structure comprises 719 residues: Forkhead box protein K1 (719 aa).

Alanine 2 carries the post-translational modification N-acetylalanine. Positions 2-40 (AEVGEDSGARALLALRSAPCSPVLCAAAAAAAFPATTSP) are interaction with SIN3A and SIN3B. Residues 35–67 (PATTSPPPPAQPPPGPPALPAEPGPGPVPSTVA) form a disordered region. The segment covering 38–62 (TSPPPPAQPPPGPPALPAEPGPGPV) has biased composition (pro residues). The segment at 81–406 (AASVRQSPGP…PLSSRSAPAS (326 aa)) is required for interaction with FOXO4 and MEF2C. At serine 87 the chain carries Phosphoserine. One can recognise an FHA domain in the interval 109–161 (VTIGRNSSQGSVDLSMGLSSFISRRHLQLSFQEPHFYLRCLGKNGVFVDGAFQ). Omega-N-methylarginine occurs at positions 147 and 177. Phosphoserine occurs at positions 199, 209, 225, and 229. 2 positions are modified to phosphothreonine: threonine 231 and threonine 233. Residues serine 239, serine 243, serine 281, and serine 285 each carry the phosphoserine modification. A DNA-binding region (fork-head) is located at residues 291–386 (KPPYSYAQLI…EQAFRKRRQR (96 aa)). The tract at residues 399 to 443 (SSRSAPASPTHPGLMSPRSSGLQTPECLSREGSPIPHDPDLGSKL) is disordered. A phosphoserine mark is found at serine 402 and serine 406. Phosphothreonine is present on threonine 408. Serine 414 carries the phosphoserine modification. At threonine 422 the chain carries Phosphothreonine. Phosphoserine occurs at positions 427, 431, and 445. Low complexity predominate over residues 665–685 (AANAAPTPAASTTTSASSSGE). Residues 665-719 (AANAAPTPAASTTTSASSSGEPEVKRSRVEEPGGTATTQPTAMAATGPQGPGTGE) are disordered. The segment covering 686-695 (PEVKRSRVEE) has biased composition (basic and acidic residues). Residues 696–712 (PGGTATTQPTAMAATGP) are compositionally biased toward low complexity.

In terms of assembly, interacts with SIN3A and SIN3B (via PAH2) to form a complex which represses transcription. Component of SIN3A-, but not SIN3B-, containing multiprotein complexes. Interacts with FOXO4 and MEF2C; both interactions inhibit FOXO4 and MEF2C transactivation activity. Interacts (when phosphorylated) with YWHAE/14-3-3-epsilon; promotes sequestration in the cytoplasm and leads to impaired ability to bind DNA. Interacts with FHL2. Interacts with SRF. Interacts with DVL2 and DVL3; the interaction induces DVL2 nuclear translocation. Interacts with BAP1 (when phosphorylated). Accessory component of the polycomb repressive deubiquitinase (PR-DUB) complex, at least composed of BAP1, one of ASXL1, ASXL2 or (probably) ASXL3 and one of MBD5 or MBD6. The PR-DUB core associates with a number of accessory proteins, including FOXK1, FOXK2, KDM1B, HCFC1 and OGT. Post-translationally, phosphorylation by GSK3 (GSK3A or GSK3B) promotes interaction with YWHAE/14-3-3-epsilon and retention in the cytoplasm. In response to mTORC1 signaling, phosphorylation by GSK3 is prevented, leading to translocation to the nucleus. In terms of tissue distribution, expressed in tissues and cells in which the myoglobin gene is transcriptionally active including cardiac and skeletal myocytes, brain and kidney. In the adult brain, expressed in the piriform cortex and the indusium griseum. In the hippocampus, expression is localized to the dentate gyrus and CA3 area. In the cerebellum, expression is confined to the Purkinje cell layer. Present in neuroretinal cells: expressed in rod bipolar cells, amacrine cells and ganglion cells (at protein level).

Its subcellular location is the nucleus. It is found in the cytoplasm. Functionally, transcriptional regulator involved in different processes such as glucose metabolism, aerobic glycolysis, muscle cell differentiation and autophagy. Recognizes and binds the forkhead DNA sequence motif (5'-GTAAACA-3') and can both act as a transcription activator or repressor, depending on the context. Together with FOXK2, acts as a key regulator of metabolic reprogramming towards aerobic glycolysis, a process in which glucose is converted to lactate in the presence of oxygen. Acts by promoting expression of enzymes for glycolysis (such as hexokinase-2 (HK2), phosphofructokinase, pyruvate kinase (PKLR) and lactate dehydrogenase), while suppressing further oxidation of pyruvate in the mitochondria by up-regulating pyruvate dehydrogenase kinases PDK1 and PDK4. Probably plays a role in gluconeogenesis during overnight fasting, when lactate from white adipose tissue and muscle is the main substrate. Involved in mTORC1-mediated metabolic reprogramming: in response to mTORC1 signaling, translocates into the nucleus and regulates the expression of genes associated with glycolysis and downstream anabolic pathways, such as HIF1A, thereby regulating glucose metabolism. Together with FOXK2, acts as a negative regulator of autophagy in skeletal muscle: in response to starvation, enters the nucleus, binds the promoters of autophagy genes and represses their expression, preventing proteolysis of skeletal muscle proteins. Acts as a transcriptional regulator of the myogenic progenitor cell population in skeletal muscle. Binds to the upstream enhancer region (CCAC box) of myoglobin (MB) gene, regulating the myogenic progenitor cell population. Promotes muscle progenitor cell proliferation by repressing the transcriptional activity of FOXO4, thereby inhibiting myogenic differentiation. Involved in remodeling processes of adult muscles that occur in response to physiological stimuli. Required to correct temporal orchestration of molecular and cellular events necessary for muscle repair. Represses myogenic differentiation by inhibiting MEFC activity. Positively regulates Wnt/beta-catenin signaling by translocating DVL into the nucleus. Reduces virus replication, probably by binding the interferon stimulated response element (ISRE) to promote antiviral gene expression. Accessory component of the polycomb repressive deubiquitinase (PR-DUB) complex; recruits the PR-DUB complex to specific FOXK1-bound genes. The polypeptide is Forkhead box protein K1 (Mus musculus (Mouse)).